We begin with the raw amino-acid sequence, 288 residues long: Quinate/shikimate dehydrogenase (288 aa).

Residues Lys71 and Asp107 each contribute to the substrate site. NAD(+)-binding positions include 132–135 (AGGA), 155–158 (NRRD), Lys205, 232–235 (CVYN), and Gly255.

This sequence belongs to the shikimate dehydrogenase family. In terms of assembly, homodimer.

It catalyses the reaction L-quinate + NAD(+) = 3-dehydroquinate + NADH + H(+). It carries out the reaction L-quinate + NADP(+) = 3-dehydroquinate + NADPH + H(+). The enzyme catalyses shikimate + NADP(+) = 3-dehydroshikimate + NADPH + H(+). The catalysed reaction is shikimate + NAD(+) = 3-dehydroshikimate + NADH + H(+). Its pathway is metabolic intermediate biosynthesis; chorismate biosynthesis; chorismate from D-erythrose 4-phosphate and phosphoenolpyruvate: step 4/7. In terms of biological role, the actual biological function of YdiB remains unclear, nor is it known whether 3-dehydroshikimate or quinate represents the natural substrate. Catalyzes the reversible NAD-dependent reduction of both 3-dehydroshikimate (DHSA) and 3-dehydroquinate to yield shikimate (SA) and quinate, respectively. It can use both NAD or NADP for catalysis, however it has higher catalytic efficiency with NAD. The protein is Quinate/shikimate dehydrogenase of Shigella flexneri.